A 692-amino-acid polypeptide reads, in one-letter code: DNA ligase (692 aa).

Residues 35 to 39 (DLVYD), 88 to 89 (SL), and glutamate 117 each bind NAD(+). Lysine 119 functions as the N6-AMP-lysine intermediate in the catalytic mechanism. The NAD(+) site is built by arginine 140, glutamate 176, lysine 301, and lysine 325. Cysteine 416, cysteine 419, cysteine 434, and cysteine 439 together coordinate Zn(2+). A BRCT domain is found at 611–692 (LTNQSNSWAS…FDLIKNSKKT (82 aa)).

Belongs to the NAD-dependent DNA ligase family. LigA subfamily. It depends on Mg(2+) as a cofactor. Requires Mn(2+) as cofactor.

It catalyses the reaction NAD(+) + (deoxyribonucleotide)n-3'-hydroxyl + 5'-phospho-(deoxyribonucleotide)m = (deoxyribonucleotide)n+m + AMP + beta-nicotinamide D-nucleotide.. In terms of biological role, DNA ligase that catalyzes the formation of phosphodiester linkages between 5'-phosphoryl and 3'-hydroxyl groups in double-stranded DNA using NAD as a coenzyme and as the energy source for the reaction. It is essential for DNA replication and repair of damaged DNA. The sequence is that of DNA ligase from Mesomycoplasma hyopneumoniae (strain J / ATCC 25934 / NCTC 10110) (Mycoplasma hyopneumoniae).